Reading from the N-terminus, the 422-residue chain is G2/mitotic-specific cyclin-A (422 aa).

Residues 1 to 29 (MSQPFALHHDGENQMQRRGKMNTRSNGLS) form a disordered region.

This sequence belongs to the cyclin family. Cyclin AB subfamily.

Functionally, essential for the control of the cell cycle at the G2/M (mitosis) transition. Interacts with the CDC2 and CDK2 protein kinases to form MPF. G2/M cyclins accumulate steadily during G2 and are abruptly destroyed at mitosis. This is G2/mitotic-specific cyclin-A from Spisula solidissima (Atlantic surf-clam).